A 161-amino-acid chain; its full sequence is uncharacterized protein (161 aa).

Interacts with ribosomes.

This is an uncharacterized protein from Saccharomyces cerevisiae (strain ATCC 204508 / S288c) (Baker's yeast).